The primary structure comprises 255 residues: Imidazole glycerol phosphate synthase subunit HisF (255 aa).

Active-site residues include Asp-11 and Asp-130.

Belongs to the HisA/HisF family. In terms of assembly, heterodimer of HisH and HisF.

It localises to the cytoplasm. The catalysed reaction is 5-[(5-phospho-1-deoxy-D-ribulos-1-ylimino)methylamino]-1-(5-phospho-beta-D-ribosyl)imidazole-4-carboxamide + L-glutamine = D-erythro-1-(imidazol-4-yl)glycerol 3-phosphate + 5-amino-1-(5-phospho-beta-D-ribosyl)imidazole-4-carboxamide + L-glutamate + H(+). The protein operates within amino-acid biosynthesis; L-histidine biosynthesis; L-histidine from 5-phospho-alpha-D-ribose 1-diphosphate: step 5/9. Its function is as follows. IGPS catalyzes the conversion of PRFAR and glutamine to IGP, AICAR and glutamate. The HisF subunit catalyzes the cyclization activity that produces IGP and AICAR from PRFAR using the ammonia provided by the HisH subunit. The chain is Imidazole glycerol phosphate synthase subunit HisF from Rhodopseudomonas palustris (strain ATCC BAA-98 / CGA009).